Here is a 108-residue protein sequence, read N- to C-terminus: DNA-binding protein HBbu (108 aa).

It belongs to the bacterial histone-like protein family.

Functionally, histone-like DNA-binding protein which is capable of wrapping DNA to stabilize it, and thus to prevent its denaturation under extreme environmental conditions. The sequence is that of DNA-binding protein HBbu (hbb) from Borrelia parkeri.